Reading from the N-terminus, the 1499-residue chain is Autophagy-related protein 2 (1499 aa).

Residues 211 to 221 show a composition bias toward polar residues; sequence EQSVPSYGSSS. Residues 211-237 form a disordered region; the sequence is EQSVPSYGSSSSDKEDDNTSDSEDPLS. Residues 224-234 are compositionally biased toward acidic residues; it reads KEDDNTSDSED.

The protein belongs to the ATG2 family.

Its subcellular location is the preautophagosomal structure membrane. It is found in the endoplasmic reticulum membrane. It carries out the reaction a 1,2-diacyl-sn-glycero-3-phosphocholine(in) = a 1,2-diacyl-sn-glycero-3-phosphocholine(out). The catalysed reaction is a 1,2-diacyl-sn-glycero-3-phospho-L-serine(in) = a 1,2-diacyl-sn-glycero-3-phospho-L-serine(out). The enzyme catalyses a 1,2-diacyl-sn-glycero-3-phosphoethanolamine(in) = a 1,2-diacyl-sn-glycero-3-phosphoethanolamine(out). In terms of biological role, lipid transfer protein required for autophagosome completion and peroxisome degradation. Tethers the edge of the isolation membrane (IM) to the endoplasmic reticulum (ER) and mediates direct lipid transfer from ER to IM for IM expansion. ATG2 binds to the ER exit site (ERES), which is the membrane source for autophagosome formation, using basic residues in its N-terminal region (NR) and to the expanding edge of the IM through its C-terminal region. The latter binding is assisted by an ATG18-PtdIns3P interaction. ATG2 then extracts phospholipids from the membrane source using its NR and transfers them to ATG9 to the IM through its predicted beta-sheet-rich structure for membrane expansion. The polypeptide is Autophagy-related protein 2 (Kluyveromyces marxianus (strain DMKU3-1042 / BCC 29191 / NBRC 104275) (Yeast)).